The primary structure comprises 118 residues: Ribosome-binding factor A (118 aa).

This sequence belongs to the RbfA family. In terms of assembly, monomer. Binds 30S ribosomal subunits, but not 50S ribosomal subunits or 70S ribosomes.

It is found in the cytoplasm. One of several proteins that assist in the late maturation steps of the functional core of the 30S ribosomal subunit. Associates with free 30S ribosomal subunits (but not with 30S subunits that are part of 70S ribosomes or polysomes). Required for efficient processing of 16S rRNA. May interact with the 5'-terminal helix region of 16S rRNA. The sequence is that of Ribosome-binding factor A from Geobacter metallireducens (strain ATCC 53774 / DSM 7210 / GS-15).